A 115-amino-acid polypeptide reads, in one-letter code: Vespryn (115 aa).

A signal peptide spans 1–15 (MTWLLLCLLAQYENG). In terms of domain architecture, B30.2/SPRY spans 22–115 (SSSAKPYKTS…VKRKDHLRLT (94 aa)).

It belongs to the ohanin/vespryn family. Expressed by the venom gland.

The protein localises to the secreted. Neurotoxin that produces dose-dependent hypolocomotion and hyperalgesia in mice. May directly act on the central nervous system, as it is 6500-fold more potent when administered intracerebroventricularly than intraperitoneal. This chain is Vespryn, found in Pogona barbata (Bearded dragon).